The chain runs to 617 residues: Cell pattern formation-associated protein STUA (617 aa).

The segment at 1–79 is disordered; that stretch reads MNQPAADMYY…PASQMGQNVL (79 aa). Polar residues predominate over residues 24-34; the sequence is TVTSGAMSYHS. A compositionally biased stretch (low complexity) spans 45-58; that stretch reads PQYAPQPQYSQYGY. Positions 61–76 are enriched in polar residues; that stretch reads GLTSPQSAQPASQMGQ. Residues 106 to 212 enclose the HTH APSES-type domain; it reads RVTATLWEDE…HNIGALLYHP (107 aa). Residues 140-161 constitute a DNA-binding region (H-T-H motif); that stretch reads GTKLLNVAGMTRGRRDGILKSE. Disordered stretches follow at residues 223-274, 300-451, and 463-617; these read AAAE…MGRP, SDSG…DSGA, and APAV…PRRR. Composition is skewed to low complexity over residues 305-318 and 334-345; these read QWAQGQGMGSAQGA and PATPASTPPGTT. Polar residues-rich tracts occupy residues 346-361 and 368-382; these read IQNMQSYQSGAQQYDN and PSAQQSPYQATNPAS. Over residues 438-447 the composition is skewed to basic and acidic residues; that stretch reads EHDHDAEYTH. Positions 488-509 are enriched in low complexity; it reads PASGRATPRTAAAPQPYYSQQA. 2 stretches are compositionally biased toward polar residues: residues 519-533 and 553-563; these read QQPSSNLYNVMSNDR and SMSNGYASQMN. Residues 569-593 form a nuclear localization domain region; it reads KRGRDEDDDLQRPSSGGGMDLKRRK. Residues 599-617 show a composition bias toward low complexity; sequence QVPAMAYAPPVMAQQPRRR.

This sequence belongs to the EFG1/PHD1/stuA family.

Its subcellular location is the nucleus. In terms of biological role, transcription factor that regulates asexual reproduction. Binds the StuA-response elements (StRE) with the consensus sequence 5'-(A/T)CGCG(T/A)N(A/C)-3' at the promoters of target genes. Required for the formation of aerial hyphae, efficient conidiation, and the formation of perithecia. Essential for the generation of normal turgor pressure within the appressorium. Required for infection of intact apple fruit and penetration of onion epidermal cells. The protein is Cell pattern formation-associated protein STUA of Colletotrichum gloeosporioides (Anthracnose fungus).